A 372-amino-acid polypeptide reads, in one-letter code: Stress-activated protein kinase JNK (372 aa).

The Protein kinase domain maps to 24–320 (YINLRPIGSG…VDEALKHEYI (297 aa)). ATP contacts are provided by residues 31-36 (GSGAQG) and Lys53. Asp149 (proton acceptor) is an active-site residue. Thr181 carries the post-translational modification Phosphothreonine. Positions 181–183 (TPY) match the TXY motif. At Tyr183 the chain carries Phosphotyrosine.

Belongs to the protein kinase superfamily. CMGC Ser/Thr protein kinase family. MAP kinase subfamily. As to quaternary structure, interacts with MKP-4 (via tyrosine-protein phosphatase domain); the interaction dephosphorylates bsk. The cofactor is Mg(2+). Post-translationally, dually phosphorylated on Thr-181 and Tyr-183, which activates the enzyme. In terms of tissue distribution, during gastrulation, expression is seen in cells undergoing morphogenetic movements. By stage 9 of embryonic development, expression is ubiquitous. At stages 12-14, expression occurs in epidermis and central nervous system. At stage 15, expression is restricted to ventral nerve cord, brain and some peripheral neurons. In larvae, expression is seen in all imaginal disks, with highest levels in wing and eye disks, and in the CNS. Adults express the protein in fat body and hemocytes.

It localises to the nucleus. The protein resides in the cytoplasm. It carries out the reaction L-seryl-[protein] + ATP = O-phospho-L-seryl-[protein] + ADP + H(+). It catalyses the reaction L-threonyl-[protein] + ATP = O-phospho-L-threonyl-[protein] + ADP + H(+). Its activity is regulated as follows. Activated by threonine and tyrosine phosphorylation by the dual specificity kinase, hep. Inhibited by dual specificity phosphatase, puckered. Functionally, mitogen-activated protein kinase and key component of the c-Jun N-terminal kinase (JNK) pathway which phosphorylate and activate transcription factors involved in a wide range of biological processes including response to various stresses, cellular proliferation, differentiation and migration, and regulation of cell shape. Responds to activation by environmental stress by phosphorylating a number of transcription factors, primarily components of AP-1 such as Jra and also the transcriptional repressor aop, and thus regulates transcriptional activity. Component of the immune response activated by bacterial infection, and is involved in wound healing and in dorsal closure, a morphogenetic movement during embryogenesis. Functions in the systematic response to wounding acting downstream of the Hayan-phenoloxidase PPO1 cascade. During epidermal wound healing involved in cellular polarization by inducing the translocation of sktl and mys/integrin beta to the trailing edge. Exhibits cytoprotective activity in neuronal cells in response to wounding to the integument. Controls the expression of a phosphatase, puckered, at the edges of wounded epidermal tissue and in the dorsal epithelium during dorsal closure. Regulates the activity of SREBP in neurons and thereby the accumulation of lipids in glia. Plays a role in positively regulating the expression of DIP2 independently of AP-1, thereby ensuring proper axon guidance in mushroom bodies. In enterocytes and differentiating progenitors of the gut that are experiencing inorganic phosphate (Pi) deficiency, activated by Cka to induce nearby progenitor cells to proliferate and form new absorptive cells, probably helping the organism to cope with the nutrient deficiency by maximizing absorption of dietary Pi. The protein is Stress-activated protein kinase JNK of Drosophila melanogaster (Fruit fly).